Reading from the N-terminus, the 56-residue chain is uncharacterized protein (56 aa).

The chain crosses the membrane as a helical span at residues 33–53 (INIIYLAIMKIIMNIIMMIMI).

Its subcellular location is the host membrane. This is an uncharacterized protein from Bos taurus (Bovine).